The primary structure comprises 233 residues: Ribonuclease 3 (233 aa).

In terms of domain architecture, RNase III spans 4 to 126 (LNKLMERLGH…IVGSIYIDAG (123 aa)). Glu-39 is a binding site for Mg(2+). Asp-43 is a catalytic residue. The Mg(2+) site is built by Asp-112 and Glu-115. Residue Glu-115 is part of the active site. Residues 153–222 (DAKSLLQEWL…AKRFLELLDD (70 aa)) enclose the DRBM domain.

This sequence belongs to the ribonuclease III family. In terms of assembly, homodimer. The cofactor is Mg(2+).

Its subcellular location is the cytoplasm. It carries out the reaction Endonucleolytic cleavage to 5'-phosphomonoester.. Functionally, digests double-stranded RNA. Involved in the processing of primary rRNA transcript to yield the immediate precursors to the large and small rRNAs (23S and 16S). Processes some mRNAs, and tRNAs when they are encoded in the rRNA operon. Processes pre-crRNA and tracrRNA of type II CRISPR loci if present in the organism. In Coxiella burnetii (strain CbuG_Q212) (Coxiella burnetii (strain Q212)), this protein is Ribonuclease 3.